Here is a 122-residue protein sequence, read N- to C-terminus: Large ribosomal subunit protein bL12 (122 aa).

Belongs to the bacterial ribosomal protein bL12 family. As to quaternary structure, homodimer. Part of the ribosomal stalk of the 50S ribosomal subunit. Forms a multimeric L10(L12)X complex, where L10 forms an elongated spine to which 2 to 4 L12 dimers bind in a sequential fashion. Binds GTP-bound translation factors.

Functionally, forms part of the ribosomal stalk which helps the ribosome interact with GTP-bound translation factors. Is thus essential for accurate translation. This Staphylococcus saprophyticus subsp. saprophyticus (strain ATCC 15305 / DSM 20229 / NCIMB 8711 / NCTC 7292 / S-41) protein is Large ribosomal subunit protein bL12.